Consider the following 103-residue polypeptide: Thioredoxin-1 (103 aa).

Residues 2-103 form the Thioredoxin domain; the sequence is VKQVSDSSEF…KLEASIKANL (102 aa). Active-site nucleophile residues include cysteine 30 and cysteine 33. Cysteine 30 and cysteine 33 are oxidised to a cystine.

This sequence belongs to the thioredoxin family.

Participates in various redox reactions through the reversible oxidation of its active center dithiol to a disulfide and catalyzes dithiol-disulfide exchange reactions. This is Thioredoxin-1 (trx1) from Schizosaccharomyces pombe (strain 972 / ATCC 24843) (Fission yeast).